Reading from the N-terminus, the 155-residue chain is 3-hydroxyacyl-[acyl-carrier-protein] dehydratase FabZ (155 aa).

The active site involves histidine 59.

The protein belongs to the thioester dehydratase family. FabZ subfamily.

It is found in the cytoplasm. It catalyses the reaction a (3R)-hydroxyacyl-[ACP] = a (2E)-enoyl-[ACP] + H2O. Its function is as follows. Involved in unsaturated fatty acids biosynthesis. Catalyzes the dehydration of short chain beta-hydroxyacyl-ACPs and long chain saturated and unsaturated beta-hydroxyacyl-ACPs. In Bartonella quintana (strain Toulouse) (Rochalimaea quintana), this protein is 3-hydroxyacyl-[acyl-carrier-protein] dehydratase FabZ.